A 365-amino-acid polypeptide reads, in one-letter code: Chorismate synthase (365 aa).

Basic and acidic residues predominate over residues 41 to 51; sequence IQKELDRRRPG. The interval 41-62 is disordered; it reads IQKELDRRRPGQSEVSTPRSEA. Residue Arg-48 coordinates NADP(+). FMN-binding positions include 125 to 127, Gly-285, 300 to 304, and Arg-327; these read RSS and KPTPS.

It belongs to the chorismate synthase family. FMNH2 is required as a cofactor.

The enzyme catalyses 5-O-(1-carboxyvinyl)-3-phosphoshikimate = chorismate + phosphate. Its pathway is metabolic intermediate biosynthesis; chorismate biosynthesis; chorismate from D-erythrose 4-phosphate and phosphoenolpyruvate: step 7/7. Catalyzes the anti-1,4-elimination of the C-3 phosphate and the C-6 proR hydrogen from 5-enolpyruvylshikimate-3-phosphate (EPSP) to yield chorismate, which is the branch point compound that serves as the starting substrate for the three terminal pathways of aromatic amino acid biosynthesis. This reaction introduces a second double bond into the aromatic ring system. The chain is Chorismate synthase from Methanosarcina acetivorans (strain ATCC 35395 / DSM 2834 / JCM 12185 / C2A).